A 624-amino-acid polypeptide reads, in one-letter code: Chaperone protein HtpG (624 aa).

Residues 1–336 (MKGQETRGFQ…SNDLPLNVSR (336 aa)) are a; substrate-binding. The tract at residues 337 to 552 (EILQDSTVTR…ADEMSTQMAK (216 aa)) is b. The segment at 553–624 (LFAAAGQAVP…IRRMNQLLVS (72 aa)) is c.

Belongs to the heat shock protein 90 family. In terms of assembly, homodimer.

The protein resides in the cytoplasm. Its function is as follows. Molecular chaperone. Has ATPase activity. In Citrobacter koseri (strain ATCC BAA-895 / CDC 4225-83 / SGSC4696), this protein is Chaperone protein HtpG.